A 185-amino-acid polypeptide reads, in one-letter code: Ribosome-recycling factor (185 aa).

Residues 128-158 (VRNTRQDANNKVKKLEKDKEISEDESKKAQE) form a disordered region.

It belongs to the RRF family.

It is found in the cytoplasm. Functionally, responsible for the release of ribosomes from messenger RNA at the termination of protein biosynthesis. May increase the efficiency of translation by recycling ribosomes from one round of translation to another. The sequence is that of Ribosome-recycling factor from Helicobacter pylori (strain J99 / ATCC 700824) (Campylobacter pylori J99).